A 684-amino-acid chain; its full sequence is Pre-mRNA-splicing factor CLF1 (684 aa).

HAT repeat units follow at residues 43–75 (DWQR…FEFD), 77–109 (KDIR…SEIK), 111–143 (KNIN…LEES), 145–176 (GNQG…FETR), 178–209 (LNFE…FEQT), 211–251 (GDIS…WEAS), 253–285 (GEYE…FEKK), 295–327 (IVIA…LVEE), 332–364 (QLTS…ICVR), 374–410 (NDLP…FEIR), 412–443 (NNLL…LEIR), 445–477 (KEFD…LEEN), 518–550 (AEYE…FEST), and 584–622 (ENKH…YEKV).

This sequence belongs to the crooked-neck family. As to quaternary structure, associated with the spliceosome.

The protein localises to the nucleus. Functionally, involved in pre-mRNA splicing and cell cycle progression. Required for the spliceosome assembly and initiation of the DNA replication. The chain is Pre-mRNA-splicing factor CLF1 (CLF1) from Kluyveromyces lactis (strain ATCC 8585 / CBS 2359 / DSM 70799 / NBRC 1267 / NRRL Y-1140 / WM37) (Yeast).